Consider the following 279-residue polypeptide: MGILYLVATPIGNLGDMTPRAVETLQTVDLIAAEDTRHTGKLLQHFQITTPQISYHDHNRHGRTQELLAKLQAGQNIALVSDAGTPGISDPGQELVAACGEANIEVIPIPGATALIAALISSGLATDRFVFEGFLSTKNRPRQQLLQSLAQEERTIILYEAPHRLLATLTDLQTFLGQERSLTVARELTKYHEQFWRGTLQTAIAYFTENTPKGEFCLVIAGATPEDRPSFSEENLRDELRSLMAKGLTRSQASRQLAEETKLPRRQLYQLSLELEADG.

It belongs to the methyltransferase superfamily. RsmI family.

The protein resides in the cytoplasm. It catalyses the reaction cytidine(1402) in 16S rRNA + S-adenosyl-L-methionine = 2'-O-methylcytidine(1402) in 16S rRNA + S-adenosyl-L-homocysteine + H(+). Catalyzes the 2'-O-methylation of the ribose of cytidine 1402 (C1402) in 16S rRNA. The polypeptide is Ribosomal RNA small subunit methyltransferase I (Synechocystis sp. (strain ATCC 27184 / PCC 6803 / Kazusa)).